A 365-amino-acid chain; its full sequence is Fructose-1,6-bisphosphatase class 1 2 (365 aa).

Residues glutamate 100, aspartate 122, leucine 124, and aspartate 125 each contribute to the Mg(2+) site. Substrate is bound by residues 125–128 (DGSS) and asparagine 221. Position 293 (glutamate 293) interacts with Mg(2+).

It belongs to the FBPase class 1 family. Homotetramer. Mg(2+) is required as a cofactor.

The protein resides in the cytoplasm. The enzyme catalyses beta-D-fructose 1,6-bisphosphate + H2O = beta-D-fructose 6-phosphate + phosphate. The protein operates within carbohydrate biosynthesis; gluconeogenesis. In Leptothrix cholodnii (strain ATCC 51168 / LMG 8142 / SP-6) (Leptothrix discophora (strain SP-6)), this protein is Fructose-1,6-bisphosphatase class 1 2.